The primary structure comprises 418 residues: Tol-Pal system protein TolB (418 aa).

Positions M1–A21 are cleaved as a signal peptide.

Belongs to the TolB family. In terms of assembly, the Tol-Pal system is composed of five core proteins: the inner membrane proteins TolA, TolQ and TolR, the periplasmic protein TolB and the outer membrane protein Pal. They form a network linking the inner and outer membranes and the peptidoglycan layer.

It localises to the periplasm. Part of the Tol-Pal system, which plays a role in outer membrane invagination during cell division and is important for maintaining outer membrane integrity. The polypeptide is Tol-Pal system protein TolB (Wolbachia pipientis subsp. Culex pipiens (strain wPip)).